The following is a 177-amino-acid chain: Adenine phosphoribosyltransferase (177 aa).

Belongs to the purine/pyrimidine phosphoribosyltransferase family. In terms of assembly, homodimer.

Its subcellular location is the cytoplasm. It catalyses the reaction AMP + diphosphate = 5-phospho-alpha-D-ribose 1-diphosphate + adenine. The protein operates within purine metabolism; AMP biosynthesis via salvage pathway; AMP from adenine: step 1/1. Functionally, catalyzes a salvage reaction resulting in the formation of AMP, that is energically less costly than de novo synthesis. The protein is Adenine phosphoribosyltransferase of Mycobacteroides abscessus (strain ATCC 19977 / DSM 44196 / CCUG 20993 / CIP 104536 / JCM 13569 / NCTC 13031 / TMC 1543 / L948) (Mycobacterium abscessus).